The sequence spans 201 residues: Recombination protein RecR (201 aa).

The C4-type zinc-finger motif lies at 60–75 (CQICGNIDTRDPCTIC). The region spanning 83–178 (TLLVVVETVA…KITRLAHGVP (96 aa)) is the Toprim domain.

This sequence belongs to the RecR family.

In terms of biological role, may play a role in DNA repair. It seems to be involved in an RecBC-independent recombinational process of DNA repair. It may act with RecF and RecO. The polypeptide is Recombination protein RecR (Beijerinckia indica subsp. indica (strain ATCC 9039 / DSM 1715 / NCIMB 8712)).